Consider the following 471-residue polypeptide: Glutamate--tRNA ligase (471 aa).

Positions 9–19 (PSPTGYLHVGG) match the 'HIGH' region motif. The Zn(2+) site is built by Cys-98, Cys-100, Cys-125, and His-127. A 'KMSKS' region motif is present at residues 237–241 (KLSKR). Lys-240 is an ATP binding site.

It belongs to the class-I aminoacyl-tRNA synthetase family. Glutamate--tRNA ligase type 1 subfamily. As to quaternary structure, monomer. The cofactor is Zn(2+).

It localises to the cytoplasm. The enzyme catalyses tRNA(Glu) + L-glutamate + ATP = L-glutamyl-tRNA(Glu) + AMP + diphosphate. Its function is as follows. Catalyzes the attachment of glutamate to tRNA(Glu) in a two-step reaction: glutamate is first activated by ATP to form Glu-AMP and then transferred to the acceptor end of tRNA(Glu). This chain is Glutamate--tRNA ligase, found in Escherichia coli O6:K15:H31 (strain 536 / UPEC).